A 213-amino-acid chain; its full sequence is Uridine kinase (213 aa).

14–21 (GASASGKS) contacts ATP.

It belongs to the uridine kinase family.

The protein localises to the cytoplasm. It carries out the reaction uridine + ATP = UMP + ADP + H(+). The enzyme catalyses cytidine + ATP = CMP + ADP + H(+). The protein operates within pyrimidine metabolism; CTP biosynthesis via salvage pathway; CTP from cytidine: step 1/3. It functions in the pathway pyrimidine metabolism; UMP biosynthesis via salvage pathway; UMP from uridine: step 1/1. This is Uridine kinase from Vibrio campbellii (strain ATCC BAA-1116).